We begin with the raw amino-acid sequence, 262 residues long: Troponin T, slow skeletal muscle (262 aa).

Acidic residues predominate over residues 1 to 31 (MSDAEEQEYEEEQPEEEEAAEEEEAPEEPEP). 3 disordered regions span residues 1–59 (MSDA…PEGE), 107–153 (RAER…KKKV), and 165–197 (LVKAEQKRGKRQTGREMKQRILSERKKPLNIDH). Ser-2 bears the Phosphoserine; by CK2 mark. The span at 32-41 (VAEREEERPK) shows a compositional bias: basic and acidic residues. The segment covering 43–55 (SRPVVPPLIPPKI) has biased composition (pro residues). Basic and acidic residues-rich tracts occupy residues 107–149 (RAER…DDAK) and 177–197 (TGREMKQRILSERKKPLNIDH).

The protein belongs to the troponin T family. Interacts with TPM3.

Troponin T is the tropomyosin-binding subunit of troponin, the thin filament regulatory complex which confers calcium-sensitivity to striated muscle actomyosin ATPase activity. The sequence is that of Troponin T, slow skeletal muscle (TNNT1) from Sus scrofa (Pig).